Reading from the N-terminus, the 367-residue chain is DNA replication and repair protein RecF (367 aa).

30–37 is an ATP binding site; it reads GENAQGKT.

Belongs to the RecF family.

The protein resides in the cytoplasm. Functionally, the RecF protein is involved in DNA metabolism; it is required for DNA replication and normal SOS inducibility. RecF binds preferentially to single-stranded, linear DNA. It also seems to bind ATP. This is DNA replication and repair protein RecF from Chlamydia abortus (strain DSM 27085 / S26/3) (Chlamydophila abortus).